We begin with the raw amino-acid sequence, 300 residues long: Geranylgeranyl diphosphate synthase (300 aa).

Lys-50, Arg-53, and His-82 together coordinate isopentenyl diphosphate. Residues Asp-89 and Asp-95 each coordinate Mg(2+). (2E,6E)-farnesyl diphosphate is bound at residue Arg-100. Arg-101 contributes to the isopentenyl diphosphate binding site. Positions 186, 187, and 224 each coordinate (2E,6E)-farnesyl diphosphate.

This sequence belongs to the FPP/GGPP synthase family. Mg(2+) is required as a cofactor.

It localises to the plastid. The protein localises to the cyanelle. It carries out the reaction isopentenyl diphosphate + (2E,6E)-farnesyl diphosphate = (2E,6E,10E)-geranylgeranyl diphosphate + diphosphate. The protein operates within isoprenoid biosynthesis; geranylgeranyl diphosphate biosynthesis; geranylgeranyl diphosphate from farnesyl diphosphate and isopentenyl diphosphate: step 1/1. In terms of biological role, catalyzes the condensation of farnesyl diphosphate (FPP) and isopentenyl diphosphate (IPP) to yield geranylgeranyl diphosphate (GGPP) needed for biosynthesis of carotenoids and diterpenes. The sequence is that of Geranylgeranyl diphosphate synthase (crtE) from Cyanophora paradoxa.